Consider the following 758-residue polypeptide: G-protein alpha subunit activating protein gbas-1 (758 aa).

Over residues 30–48 the composition is skewed to acidic residues; it reads LDEVDNADFEREDDEEEVL. Residues 30–70 are disordered; that stretch reads LDEVDNADFEREDDEEEVLSEPSESPYTSTPKSSKRVNKTR. Residues 49–61 are compositionally biased toward low complexity; it reads SEPSESPYTSTPK. The GBA signature appears at 653–666; it reads ETVTVEEFLMNSYS. Positions 668-690 are disordered; it reads AAPSTSTAPAPPKAPVTAPPAPQ. The segment covering 676 to 689 has biased composition (pro residues); the sequence is PAPPKAPVTAPPAP.

As to quaternary structure, interacts (via GBA motif) with guanine nucleotide-binding protein G(o) subunit alpha goa-1 (in GDP-bound form); the interaction leads to activation of goa-1. Expressed in some neurons including the head and tail neurons, HSN and VC, in a subset of glial cells, in the distal tips cells and in the intestine.

Functionally, acts as a non-receptor guanine nucleotide exchange factor which binds to and activates G-protein alpha subunit goa-1. The sequence is that of G-protein alpha subunit activating protein gbas-1 from Caenorhabditis elegans.